A 282-amino-acid chain; its full sequence is Transcription factor LBX1 (282 aa).

Over residues methionine 1 to leucine 20 the composition is skewed to basic and acidic residues. The tract at residues methionine 1–phenylalanine 36 is disordered. The segment at residues arginine 125 to leucine 184 is a DNA-binding region (homeobox). A disordered region spans residues glutamate 210 to aspartate 282. Residues serine 218–glycine 227 are compositionally biased toward gly residues. Positions cysteine 269 to aspartate 282 are enriched in acidic residues.

As to quaternary structure, interacts with SKOR1 which acts as a transcriptional corepressor. As to expression, expressed in the dorsal part of the spinal cord and hindbrain and in presumptive myogenic cells in lateral regions of differentiating somites.

It localises to the nucleus. Functionally, transcription factor required for the development of GABAergic interneurons in the dorsal horn of the spinal cord and migration and further development of hypaxial muscle precursor cells for limb muscles, diaphragm and hypoglossal cord. This is Transcription factor LBX1 (Lbx1) from Mus musculus (Mouse).